We begin with the raw amino-acid sequence, 118 residues long: DNA-directed RNA polymerase subunit omega (118 aa).

It belongs to the RNA polymerase subunit omega family. As to quaternary structure, the RNAP catalytic core consists of 2 alpha, 1 beta, 1 beta' and 1 omega subunit. When a sigma factor is associated with the core the holoenzyme is formed, which can initiate transcription.

The catalysed reaction is RNA(n) + a ribonucleoside 5'-triphosphate = RNA(n+1) + diphosphate. Promotes RNA polymerase assembly. Latches the N- and C-terminal regions of the beta' subunit thereby facilitating its interaction with the beta and alpha subunits. This chain is DNA-directed RNA polymerase subunit omega, found in Paracoccus denitrificans (strain Pd 1222).